The sequence spans 290 residues: 4-hydroxybenzoate octaprenyltransferase (290 aa).

The next 8 membrane-spanning stretches (helical) occupy residues 23–43 (IGAL…TPGM), 46–66 (LWIL…GCVV), 99–119 (LFVV…AMTI), 141–161 (LPQV…FAAV), 163–183 (ESLP…AVAY), 212–232 (TLII…IGWL), 233–253 (NGLG…FVYQ), and 268–288 (AFMN…MSYW).

Belongs to the UbiA prenyltransferase family. The cofactor is Mg(2+).

The protein resides in the cell inner membrane. It catalyses the reaction all-trans-octaprenyl diphosphate + 4-hydroxybenzoate = 4-hydroxy-3-(all-trans-octaprenyl)benzoate + diphosphate. The protein operates within cofactor biosynthesis; ubiquinone biosynthesis. Catalyzes the prenylation of para-hydroxybenzoate (PHB) with an all-trans polyprenyl group. Mediates the second step in the final reaction sequence of ubiquinone-8 (UQ-8) biosynthesis, which is the condensation of the polyisoprenoid side chain with PHB, generating the first membrane-bound Q intermediate 3-octaprenyl-4-hydroxybenzoate. The polypeptide is 4-hydroxybenzoate octaprenyltransferase (Salmonella typhi).